The following is a 258-amino-acid chain: Probable splicing factor, arginine/serine-rich 3 (258 aa).

The region spanning 9–83 (QKVYVGNLPG…RRIRVEFTRG (75 aa)) is the RRM 1 domain. Disordered stretches follow at residues 81–120 (TRGVGPRGPGGRPLQDGGDHRGGDFRGGRGGGRGGGPQRR) and 190–258 (AYIR…PSPQ). Residues 97–107 (GGDHRGGDFRG) show a composition bias toward basic and acidic residues. The segment covering 108–117 (GRGGGRGGGP) has biased composition (gly residues). Positions 123-197 (YRVIVEGLPP…ETAYIRVRED (75 aa)) constitute an RRM 2 domain. Positions 208-223 (GRDRSRSRSPRAERRA) are enriched in basic and acidic residues. Basic residues predominate over residues 228–246 (SPRRSRSRSRSRSRSRSRS). Over residues 247 to 258 (ASRSPSRSPSPQ) the composition is skewed to low complexity.

This sequence belongs to the splicing factor SR family. In terms of assembly, interacts with spk-1. Post-translationally, directly phosphorylated by spk-1 in vitro on serine residues of the RS domain. Predominantly coexpressed with spk-1 in adult hermaphrodite germlines.

It is found in the nucleus. Its function is as follows. Plays an essential role in embryogenesis. The chain is Probable splicing factor, arginine/serine-rich 3 (rsp-3) from Caenorhabditis elegans.